A 592-amino-acid polypeptide reads, in one-letter code: Methylenetetrahydrofolate reductase (NADH) 1 (592 aa).

Catalysis depends on E21, which acts as the Proton donor/acceptor. NAD(+) is bound by residues 21 to 26 (EFFPPK) and 52 to 53 (TW). FAD-binding positions include 52-53 (TW), H81, 111-113 (RGD), Y153, 157-160 (HPDV), D175, and K182. Residue D113 coordinates substrate. Q193 and Y285 together coordinate substrate.

It belongs to the methylenetetrahydrofolate reductase family. As to quaternary structure, homodimer. FAD is required as a cofactor.

It catalyses the reaction (6S)-5-methyl-5,6,7,8-tetrahydrofolate + NAD(+) = (6R)-5,10-methylene-5,6,7,8-tetrahydrofolate + NADH + H(+). The protein operates within one-carbon metabolism; tetrahydrofolate interconversion. With respect to regulation, plant MTHFRs strongly prefer NADH over NADPH. Not inhibited by methionine or S-adenosylmethionine. The probable reversibility of the MTHFR reaction in plants suggests that they can metabolize the methyl group of 5,10-methylenetetrahydrofolate to serine, sugars and starch. The polypeptide is Methylenetetrahydrofolate reductase (NADH) 1 (MTHFR1) (Arabidopsis thaliana (Mouse-ear cress)).